The sequence spans 799 residues: MRIPLSWLKEYIDLNLEPVEIAKILTMAGLEVDGYEEIGKGFSGVIVGDVLEVEKHPNADKLLIALVSDGKEIHQVVCGASNCRKGLKTAFAPVGASLIDEGKEFKIKKGKLRGIESNGMLCSAKELQISNEDDGIMELSEHLQAGTALNTLYSDTIFEISLTPNLGHCASIVGVARELSAATSHPLRYPHLVFKEEGNLINNSLTLDIEAKEACSRYTCRVIKNVKVGASPDWLKAKIEKSGLRSVNNIVDVTNYVLLEMGHPLHAFDYDLVKGKKIVVRMAQEGEIFETLDGKERILKDSHLVIADSEKPIAIAGVMGGRNSEVSEKTTNIILESAFFDPIFVRKTSKQLGLQTDASKRFERGTDPNQLISVLNRAAMLIQMVAGGIIEDSILDEQTKDFLELTIRCRLSRINQILGTTLSRGEVETIFQSLGFHYQWDGQDSFMVCVPTYRTDVKEEIDLIEEVARIYGYDHIPRNGGRYQTSKLPDAPIYLFEKEIQSYLIAEGLQEFITCDLIGPTLVNVVQNLSMPAEAIVKVLNPTSIEQSILRTSLLPGLLQVVKYNLDHQNHQINGFEIGRIHFKDGDQYQEQSVVGILLSGFSQPYHFEEKKREYDFYDLKGIIENLLKELGIEKPQFKNLDLKTFHSGRQASLFVDELEVGSFGEVHPSIQRRLDVSQRILFGEFNLHDLMQVATKLEKVKPLAIYPGSERDWTFTIKTSVPFAEIIKAIHEQKSDLLENVLLLDIYRSEKLTVGHQNMTLRFIYRDFSKTIAQEVVENEHQRLKTAVSQKFANDLKQ.

The tRNA-binding domain occupies 39 to 150 (GKGFSGVIVG…EHLQAGTALN (112 aa)). The B5 domain maps to 402 to 478 (FLELTIRCRL…RIYGYDHIPR (77 aa)). Mg(2+)-binding residues include Asp456, Asp462, Glu465, and Glu466. The FDX-ACB domain occupies 705-798 (AIYPGSERDW…VSQKFANDLK (94 aa)).

Belongs to the phenylalanyl-tRNA synthetase beta subunit family. Type 1 subfamily. As to quaternary structure, tetramer of two alpha and two beta subunits. The cofactor is Mg(2+).

The protein localises to the cytoplasm. The catalysed reaction is tRNA(Phe) + L-phenylalanine + ATP = L-phenylalanyl-tRNA(Phe) + AMP + diphosphate + H(+). The protein is Phenylalanine--tRNA ligase beta subunit of Protochlamydia amoebophila (strain UWE25).